The chain runs to 858 residues: Leucine--tRNA ligase (858 aa).

The 'HIGH' region signature appears at 42–52; the sequence is PYPSGRLHMGH. The 'KMSKS' region signature appears at 618–622; sequence KMSKS. Lys621 is an ATP binding site.

Belongs to the class-I aminoacyl-tRNA synthetase family.

The protein localises to the cytoplasm. It carries out the reaction tRNA(Leu) + L-leucine + ATP = L-leucyl-tRNA(Leu) + AMP + diphosphate. In Aliivibrio salmonicida (strain LFI1238) (Vibrio salmonicida (strain LFI1238)), this protein is Leucine--tRNA ligase.